Here is a 109-residue protein sequence, read N- to C-terminus: Large ribosomal subunit protein P1 (109 aa).

The interval 90 to 109 (AAAKKEEEEEDDDMGFGLFD) is disordered.

It belongs to the eukaryotic ribosomal protein P1/P2 family. P1 and P2 exist as dimers at the large ribosomal subunit.

Functionally, plays an important role in the elongation step of protein synthesis. In Trypanosoma cruzi, this protein is Large ribosomal subunit protein P1.